Here is a 736-residue protein sequence, read N- to C-terminus: Gingipain R2 (736 aa).

Positions 1 to 24 (MKKNFSRIVSIVAFSSLLGGMAFA) are cleaved as a signal peptide. The propeptide occupies 25–229 (QPAERGRNPQ…SVFMNYEATR (205 aa)). Aspartate 307, valine 329, aspartate 332, tyrosine 334, glutamate 336, glutamate 390, and histidine 395 together coordinate Ca(2+). The active-site Proton donor is histidine 440. Cysteine 473 acts as the Nucleophile in catalysis. The Ca(2+) site is built by phenylalanine 478, glutamate 487, aspartate 521, glutamate 522, glutamate 525, histidine 531, aspartate 613, and glutamate 639.

It belongs to the peptidase C25 family.

The protein localises to the secreted. The enzyme catalyses Hydrolysis of proteins and small molecule substrates, with a preference for Arg in P1.. Inhibited by human histatin-3 1/24 (histatin-5). Functionally, thiol protease. Acts synergistically with RgpA to catalyze the maturation of fimbrial subunits, such as FimA. Its proteolytic activity is a major factor in both periodontal tissue destruction and in evasion of host defense mechanisms. This chain is Gingipain R2 (rgpB), found in Porphyromonas gingivalis (strain ATCC BAA-308 / W83).